Consider the following 664-residue polypeptide: Intraflagellar transport protein 70B (664 aa).

7 TPR repeats span residues 11 to 44, 45 to 78, 153 to 186, 188 to 220, 385 to 418, 423 to 456, and 458 to 491; these read DGEF…SPRS, RAGL…HPEL, YDGQ…SGYQ, DISY…GIRQ, LTEQ…YDET, IPVL…CNDH, and VWKL…NYDN. A coiled-coil region spans residues 507–534; it reads YIMTSQNEEAEELMRKIEKEEEQLSYDD. The stretch at 543–576 is one TPR 8 repeat; that stretch reads CIVNLVIGTLYCAKGNYDFGISRVIKSLEPYHKK.

This sequence belongs to the TTC30/dfy-1/fleer family. In terms of assembly, interacts with the IFT B complex components IFT27, IFT46, IFT74, IFT52, IFT57, IFT80, IFT81 and IFT88. Interacts with KIF17.

Its subcellular location is the cell projection. It localises to the cilium. In terms of biological role, required for polyglutamylation of axonemal tubulin. Plays a role in anterograde intraflagellar transport (IFT), the process by which cilia precursors are transported from the base of the cilium to the site of their incorporation at the tip. The chain is Intraflagellar transport protein 70B (Ift70b) from Rattus norvegicus (Rat).